Here is a 345-residue protein sequence, read N- to C-terminus: S-adenosylmethionine:tRNA ribosyltransferase-isomerase (345 aa).

It belongs to the QueA family. As to quaternary structure, monomer.

It is found in the cytoplasm. The enzyme catalyses 7-aminomethyl-7-carbaguanosine(34) in tRNA + S-adenosyl-L-methionine = epoxyqueuosine(34) in tRNA + adenine + L-methionine + 2 H(+). Its pathway is tRNA modification; tRNA-queuosine biosynthesis. Its function is as follows. Transfers and isomerizes the ribose moiety from AdoMet to the 7-aminomethyl group of 7-deazaguanine (preQ1-tRNA) to give epoxyqueuosine (oQ-tRNA). This is S-adenosylmethionine:tRNA ribosyltransferase-isomerase from Shewanella loihica (strain ATCC BAA-1088 / PV-4).